A 259-amino-acid chain; its full sequence is Phosphatidylglycerol--prolipoprotein diacylglyceryl transferase (259 aa).

The next 4 membrane-spanning stretches (helical) occupy residues L12–A32, I46–V66, I83–V103, and V109–I129. R131 lines the a 1,2-diacyl-sn-glycero-3-phospho-(1'-sn-glycerol) pocket. Transmembrane regions (helical) follow at residues V167–W187, L194–I214, and G226–F246.

This sequence belongs to the Lgt family.

Its subcellular location is the cell membrane. It catalyses the reaction L-cysteinyl-[prolipoprotein] + a 1,2-diacyl-sn-glycero-3-phospho-(1'-sn-glycerol) = an S-1,2-diacyl-sn-glyceryl-L-cysteinyl-[prolipoprotein] + sn-glycerol 1-phosphate + H(+). Its pathway is protein modification; lipoprotein biosynthesis (diacylglyceryl transfer). Catalyzes the transfer of the diacylglyceryl group from phosphatidylglycerol to the sulfhydryl group of the N-terminal cysteine of a prolipoprotein, the first step in the formation of mature lipoproteins. In Streptococcus equi subsp. zooepidemicus (strain H70), this protein is Phosphatidylglycerol--prolipoprotein diacylglyceryl transferase.